We begin with the raw amino-acid sequence, 178 residues long: Caveolin-1 (178 aa).

Position 2 is an N-acetylserine (S2). S2 bears the Phosphoserine mark. The tract at residues 2 to 94 (SGGKYVDSEG…WKASFTTFTV (93 aa)) is required for homooligomerization. Residues 2–104 (SGGKYVDSEG…TKYWFYRLLS (103 aa)) are Cytoplasmic-facing. The residue at position 5 (K5) is an N6-acetyllysine; alternate. K5 participates in a covalent cross-link: Glycyl lysine isopeptide (Lys-Gly) (interchain with G-Cter in ubiquitin); alternate. Y6 carries the post-translational modification Phosphotyrosine. S9 carries the phosphoserine modification. The residue at position 14 (Y14) is a Phosphotyrosine; by ABL1. The residue at position 25 (Y25) is a Phosphotyrosine. Glycyl lysine isopeptide (Lys-Gly) (interchain with G-Cter in ubiquitin) cross-links involve residues K26 and K30. At S37 the chain carries Phosphoserine. Residues K39, K47, and K57 each participate in a glycyl lysine isopeptide (Lys-Gly) (interchain with G-Cter in ubiquitin) cross-link. The interaction with CAVIN3 stretch occupies residues 82–94 (DGIWKASFTTFTV). Residues 105–125 (ALFGIPMALVWGIYFAILSFL) constitute an intramembrane region (helical). Over 126-178 (HIWAVVPCIKSFLIEIQCISRVYSIYVHTVCDPLFEAVGKIFSNVRINLQKEI) the chain is Cytoplasmic. The interacts with SPRY1, SPRY2, SPRY3 and SPRY4 stretch occupies residues 131 to 142 (VPCIKSFLIEIQ). S-palmitoyl cysteine attachment occurs at residues C133, C143, and C156. The interval 149–160 (SIYVHTVCDPLF) is interacts with SPRY1, SPRY2, and SPRY4. Residues 167 to 178 (FSNVRINLQKEI) are interacts with SPRY1, SPRY2, SPRY3 and SPRY4.

Belongs to the caveolin family. In terms of assembly, homooligomer. Interacts with GLIPR2. Interacts with NOSTRIN. Interacts with SNAP25 and STX1A. Interacts (via the N-terminus) with DPP4; the interaction is direct. Interacts with CTNNB1, CDH1 and JUP. Interacts with PACSIN2; this interaction induces membrane tubulation. Interacts with SLC7A9. Interacts with BMX and BTK. Interacts with TGFBR1. Interacts with CAVIN3 (via leucine-zipper domain) in a cholesterol-sensitive manner. Interacts with CAVIN1. Interacts with EHD2 in a cholesterol-dependent manner. Forms a ternary complex with UBXN6 and VCP; mediates CAV1 targeting to lysosomes for degradation. Interacts with ABCG1; this interaction regulates ABCG1-mediated cholesterol efflux. Interacts with NEU3; this interaction enhances NEU3 sialidase activity within caveola. Interacts (via C-terminus) with SPRY1, SPRY2 (via C-terminus), SPRY3, and SPRY4. Interacts with IGFBP5; this interaction allows trafficking of IGFBP5 from the plasma membrane to the nucleus. Post-translationally, phosphorylated at Tyr-14 by ABL1 in response to oxidative stress. Ubiquitinated. Undergo monoubiquitination and multi- and/or polyubiquitination. Monoubiquitination of N-terminal lysines promotes integration in a ternary complex with UBXN6 and VCP which promotes oligomeric CAV1 targeting to lysosomes for degradation. Ubiquitinated by ZNRF1; leading to degradation and modulation of the TLR4-mediated immune response.

The protein localises to the golgi apparatus membrane. Its subcellular location is the cell membrane. The protein resides in the membrane. It localises to the caveola. It is found in the membrane raft. May act as a scaffolding protein within caveolar membranes. Forms a stable heterooligomeric complex with CAV2 that targets to lipid rafts and drives caveolae formation. Mediates the recruitment of CAVIN proteins (CAVIN1/2/3/4) to the caveolae. Interacts directly with G-protein alpha subunits and can functionally regulate their activity. Involved in the costimulatory signal essential for T-cell receptor (TCR)-mediated T-cell activation. Its binding to DPP4 induces T-cell proliferation and NF-kappa-B activation in a T-cell receptor/CD3-dependent manner. Recruits CTNNB1 to caveolar membranes and may regulate CTNNB1-mediated signaling through the Wnt pathway. Negatively regulates TGFB1-mediated activation of SMAD2/3 by mediating the internalization of TGFBR1 from membrane rafts leading to its subsequent degradation. Binds 20(S)-hydroxycholesterol (20(S)-OHC). The protein is Caveolin-1 (CAV1) of Papio anubis (Olive baboon).